Consider the following 194-residue polypeptide: Probable GTP-binding protein EngB (194 aa).

The EngB-type G domain occupies 22–194; the sequence is DLPEYALAGR…AWQFIKEGME (173 aa). GTP contacts are provided by residues 30–37, 57–61, 75–78, 142–145, and 174–176; these read GRSNVGKS, GKTQT, DVPG, TKAD, and FSS. Mg(2+)-binding residues include S37 and T59.

Belongs to the TRAFAC class TrmE-Era-EngA-EngB-Septin-like GTPase superfamily. EngB GTPase family. Mg(2+) serves as cofactor.

Its function is as follows. Necessary for normal cell division and for the maintenance of normal septation. This is Probable GTP-binding protein EngB from Listeria innocua serovar 6a (strain ATCC BAA-680 / CLIP 11262).